The following is a 305-amino-acid chain: UDP-3-O-acyl-N-acetylglucosamine deacetylase (305 aa).

Zn(2+) is bound by residues H78, H237, and D241. Residue H264 is the Proton donor of the active site.

Belongs to the LpxC family. The cofactor is Zn(2+).

It carries out the reaction a UDP-3-O-[(3R)-3-hydroxyacyl]-N-acetyl-alpha-D-glucosamine + H2O = a UDP-3-O-[(3R)-3-hydroxyacyl]-alpha-D-glucosamine + acetate. It participates in glycolipid biosynthesis; lipid IV(A) biosynthesis; lipid IV(A) from (3R)-3-hydroxytetradecanoyl-[acyl-carrier-protein] and UDP-N-acetyl-alpha-D-glucosamine: step 2/6. Its function is as follows. Catalyzes the hydrolysis of UDP-3-O-myristoyl-N-acetylglucosamine to form UDP-3-O-myristoylglucosamine and acetate, the committed step in lipid A biosynthesis. The sequence is that of UDP-3-O-acyl-N-acetylglucosamine deacetylase from Burkholderia cenocepacia (strain HI2424).